The chain runs to 386 residues: O-phospho-L-seryl-tRNA:Cys-tRNA synthase (386 aa).

Residues 89–90, Asn196, and 219–221 contribute to the pyridoxal 5'-phosphate site; these read AR and SGH. Residue Lys222 is modified to N6-(pyridoxal phosphate)lysine.

It belongs to the SepCysS family. In terms of assembly, homodimer. Interacts with SepRS. It depends on pyridoxal 5'-phosphate as a cofactor.

It catalyses the reaction O-phospho-L-seryl-tRNA(Cys) + hydrogen sulfide + H(+) = L-cysteinyl-tRNA(Cys) + phosphate. Its function is as follows. Converts O-phospho-L-seryl-tRNA(Cys) (Sep-tRNA(Cys)) to L-cysteinyl-tRNA(Cys) (Cys-tRNA(Cys)). This chain is O-phospho-L-seryl-tRNA:Cys-tRNA synthase, found in Methanosarcina acetivorans (strain ATCC 35395 / DSM 2834 / JCM 12185 / C2A).